The following is a 64-amino-acid chain: UPF0434 protein Bcep18194_A5877 (64 aa).

It belongs to the UPF0434 family.

In Burkholderia lata (strain ATCC 17760 / DSM 23089 / LMG 22485 / NCIMB 9086 / R18194 / 383), this protein is UPF0434 protein Bcep18194_A5877.